Reading from the N-terminus, the 147-residue chain is Ribosome maturation factor RimP (147 aa).

Belongs to the RimP family.

The protein localises to the cytoplasm. Required for maturation of 30S ribosomal subunits. This is Ribosome maturation factor RimP from Legionella pneumophila (strain Paris).